The sequence spans 297 residues: Tryptophan 2,3-dioxygenase (297 aa).

Substrate-binding positions include 51 to 55, Y113, and R117; that span reads FIIQH. H240 is a heme binding site. T254 contributes to the substrate binding site.

The protein belongs to the tryptophan 2,3-dioxygenase family. Homotetramer. The cofactor is heme.

The catalysed reaction is L-tryptophan + O2 = N-formyl-L-kynurenine. It functions in the pathway amino-acid degradation; L-tryptophan degradation via kynurenine pathway; L-kynurenine from L-tryptophan: step 1/2. Functionally, heme-dependent dioxygenase that catalyzes the oxidative cleavage of the L-tryptophan (L-Trp) pyrrole ring and converts L-tryptophan to N-formyl-L-kynurenine. Catalyzes the oxidative cleavage of the indole moiety. The polypeptide is Tryptophan 2,3-dioxygenase (Xanthomonas oryzae pv. oryzae (strain MAFF 311018)).